The primary structure comprises 122 residues: Large ribosomal subunit protein uL14 (122 aa).

The protein belongs to the universal ribosomal protein uL14 family. Part of the 50S ribosomal subunit. Forms a cluster with proteins L3 and L19. In the 70S ribosome, L14 and L19 interact and together make contacts with the 16S rRNA in bridges B5 and B8.

Its function is as follows. Binds to 23S rRNA. Forms part of two intersubunit bridges in the 70S ribosome. The polypeptide is Large ribosomal subunit protein uL14 (Shewanella loihica (strain ATCC BAA-1088 / PV-4)).